The following is a 482-amino-acid chain: Uric acid transporter UacT (482 aa).

At 1-29 the chain is on the cytoplasmic side; the sequence is MSAIDSQLPSSSGQDRPTDEVDRILSPGK. Residues 30-50 traverse the membrane as a helical segment; that stretch reads LIILGLQHVLVMYAGAVAVPL. Residues 51–62 are Periplasmic-facing; that stretch reads MIGDRLGLSKEA. Residues 63 to 83 form a helical membrane-spanning segment; the sequence is IAMLISSDLFCCGIVTLLQCI. Over 84-92 the chain is Cytoplasmic; it reads GIGRFMGIR. A helical transmembrane segment spans residues 93-113; the sequence is LPVIMSVTFAAVTPMIAIGMN. The Periplasmic segment spans residues 114–115; sequence PD. A helical transmembrane segment spans residues 116–136; it reads IGLLGIFGATIAAGFITTLLA. Over 137–142 the chain is Cytoplasmic; it reads PLIGRL. Residues 143–163 form a helical membrane-spanning segment; the sequence is MPLFPPLVTGVVITSIGLSII. Topologically, residues 164-178 are periplasmic; it reads QVGIDWAAGGKGNPQ. The chain crosses the membrane as a helical span at residues 179–199; it reads YGNPVYLGISFAVLIFILLIT. The Cytoplasmic segment spans residues 200–204; sequence RYAKG. The helical transmembrane segment at 205–225 threads the bilayer; that stretch reads FMSNVAVLLGIVFGFLLSWMM. Residues 226-261 lie on the Periplasmic side of the membrane; sequence NEVNLSGLHDASWFAIVTPMSFGMPIFDPVSILTMT. The chain crosses the membrane as a helical span at residues 262-282; sequence AVLIIVFIESMGMFLALGEIV. Over 283–337 the chain is Cytoplasmic; it reads GRKLSSHDIIRGLRVDGVGTMIGGTFNSFPHTSFSQNVGLVSVTRVHSRWVCISS. The helical transmembrane segment at 338-358 threads the bilayer; it reads GIILILFGMVPKMAVLVASIP. Residue Gln-359 is a topological domain, periplasmic. A helical membrane pass occupies residues 360–380; that stretch reads FVLGGAGLVMFGMVLATGIRI. Residues 381 to 392 lie on the Cytoplasmic side of the membrane; it reads LSRCNYTTNRYN. Residues 393 to 413 form a helical membrane-spanning segment; the sequence is LYIVAISLGVGMTPTLSHDFF. Over 414-421 the chain is Periplasmic; sequence SKLPAVLQ. A helical transmembrane segment spans residues 422–442; that stretch reads PLLHSGIMLATLSAVVLNVFF. Residues 443–482 are Cytoplasmic-facing; the sequence is NGYQHHADLVKESVSDKDLKVRTVRMWLLMRKLKKNEHGE.

The protein belongs to the nucleobase:cation symporter-2 (NCS2) (TC 2.A.40) family.

The protein localises to the cell inner membrane. Inhibited in the presence of the protonophore carbonyl cyanide m-chlorophenyl hydrazone. In terms of biological role, proton-dependent high-capacity transporter for uric acid. Also shows a low capacity for transport of xanthine at 37 degrees Celsius but not at 25 degrees Celsius. The sequence is that of Uric acid transporter UacT (uacT) from Escherichia coli (strain K12).